The following is a 683-amino-acid chain: DNA-directed RNA polymerase subunit beta' (683 aa).

The Zn(2+) site is built by C69, C71, C87, and C90. Mg(2+) is bound by residues D489, D491, and D493.

Belongs to the RNA polymerase beta' chain family. RpoC1 subfamily. In terms of assembly, in plastids the minimal PEP RNA polymerase catalytic core is composed of four subunits: alpha, beta, beta', and beta''. When a (nuclear-encoded) sigma factor is associated with the core the holoenzyme is formed, which can initiate transcription. Mg(2+) is required as a cofactor. The cofactor is Zn(2+).

The protein resides in the plastid. It is found in the chloroplast. It catalyses the reaction RNA(n) + a ribonucleoside 5'-triphosphate = RNA(n+1) + diphosphate. In terms of biological role, DNA-dependent RNA polymerase catalyzes the transcription of DNA into RNA using the four ribonucleoside triphosphates as substrates. In Saccharum hybrid (Sugarcane), this protein is DNA-directed RNA polymerase subunit beta'.